Here is a 217-residue protein sequence, read N- to C-terminus: Large ribosomal subunit protein uL1 (217 aa).

Belongs to the universal ribosomal protein uL1 family. In terms of assembly, component of the large ribosomal subunit (LSU). Mature N.crassa ribosomes consist of a small (40S) and a large (60S) subunit. The 40S small subunit contains 1 molecule of ribosomal RNA (18S rRNA) and at least 32 different proteins. The large 60S subunit contains 3 rRNA molecules (26S, 5.8S and 5S rRNA) and at least 42 different proteins. uL1 forms part of the L1 stalk.

Its subcellular location is the cytoplasm. Its function is as follows. Component of the ribosome, a large ribonucleoprotein complex responsible for the synthesis of proteins in the cell. The small ribosomal subunit (SSU) binds messenger RNAs (mRNAs) and translates the encoded message by selecting cognate aminoacyl-transfer RNA (tRNA) molecules. The large subunit (LSU) contains the ribosomal catalytic site termed the peptidyl transferase center (PTC), which catalyzes the formation of peptide bonds, thereby polymerizing the amino acids delivered by tRNAs into a polypeptide chain. The nascent polypeptides leave the ribosome through a tunnel in the LSU and interact with protein factors that function in enzymatic processing, targeting, and the membrane insertion of nascent chains at the exit of the ribosomal tunnel. uL1 forms part of the L1 stalk, a mobile element that plays a role in evacuating the exit-site tRNA. The chain is Large ribosomal subunit protein uL1 (crp-74) from Neurospora crassa (strain ATCC 24698 / 74-OR23-1A / CBS 708.71 / DSM 1257 / FGSC 987).